We begin with the raw amino-acid sequence, 345 residues long: MLVLGFESSCDETGVALYDTERGLVAHALHTQMAMHAEYGGVVPELASRDHIRRIIPLTQACLAEGGKTLADLDAIAFTQGPGLGGALLVGASVANALAFGLDIPVIDVHHLEGHLLSPMLADPAPAFPFVALLVSGGHTQLMAVHGVGQYETLGETLDDAAGEAFDKTAKLLGLPYPGGPLLSRLAESGDPARFTLPRPMLNSADLDMSFSGLKTAVLTLKTRVEADLGPIDEQTRADICRAFQESIVEVLVKKSLGALKRTGLKRLVVAGGVGANRQLRAALDAACARRRVEVFYPPLSLCTDNGAMIALAGAMRLKQAHAAGSFSIKPRWDLSSLPPVNGAA.

Residues H111 and H115 each coordinate Fe cation. Substrate contacts are provided by residues 134–138, D167, G180, and N277; that span reads LVSGG. D305 contacts Fe cation.

This sequence belongs to the KAE1 / TsaD family. The cofactor is Fe(2+).

Its subcellular location is the cytoplasm. The catalysed reaction is L-threonylcarbamoyladenylate + adenosine(37) in tRNA = N(6)-L-threonylcarbamoyladenosine(37) in tRNA + AMP + H(+). In terms of biological role, required for the formation of a threonylcarbamoyl group on adenosine at position 37 (t(6)A37) in tRNAs that read codons beginning with adenine. Is involved in the transfer of the threonylcarbamoyl moiety of threonylcarbamoyl-AMP (TC-AMP) to the N6 group of A37, together with TsaE and TsaB. TsaD likely plays a direct catalytic role in this reaction. The sequence is that of tRNA N6-adenosine threonylcarbamoyltransferase from Laribacter hongkongensis (strain HLHK9).